The following is a 399-amino-acid chain: Ribonucleoside-diphosphate reductase small chain 1 (399 aa).

Phosphoserine occurs at positions 15, 24, and 41. Fe cation-binding residues include Asp-145, Glu-176, and His-179. Tyr-183 is an active-site residue. Fe cation is bound by residues Glu-239, Glu-273, and His-276.

This sequence belongs to the ribonucleoside diphosphate reductase small chain family. As to quaternary structure, heterotetramer of two large (R1) and two small (R2) subunits. S.cerevisiae has two different R1 subunits (RNR1 and RNR3) and two different R2 subunits (RNR2 and RNR4). The functional form of the small subunits is a RNR2-RNR4 heterodimer, where RNR2 provides the iron-radical center and RNR4 is required for proper folding of RNR2 and assembly with the large subunits. Under normal growth conditions, the active form of the large subunits is a homodimer of the constitutively expressed RNR1. In damaged cells or cells arrested for DNA synthesis, the reductase consists of multiple species because of the association of the small subunits (RNR2-RNR4) with either the RNR1 homodimer or a heterodimer of RNR1 and the damage-inducible RNR3. Interacts with DIF1. Fe cation serves as cofactor.

The protein localises to the nucleus. It catalyses the reaction a 2'-deoxyribonucleoside 5'-diphosphate + [thioredoxin]-disulfide + H2O = a ribonucleoside 5'-diphosphate + [thioredoxin]-dithiol. Functionally, provides the precursors necessary for DNA synthesis. Catalyzes the biosynthesis of deoxyribonucleotides from the corresponding ribonucleotides. RNR2 provides the diiron-tyrosyl radical center. The sequence is that of Ribonucleoside-diphosphate reductase small chain 1 (RNR2) from Saccharomyces cerevisiae (strain ATCC 204508 / S288c) (Baker's yeast).